We begin with the raw amino-acid sequence, 477 residues long: Phosphatidylinositol 4-kinase type 2-beta (477 aa).

The tract at residues 1–80 (MPEPPRDIMA…EDRSISASLS (80 aa)) is disordered. Ser45 is modified (phosphoserine). The 332-residue stretch at 116–447 (GVFPERISQG…AQMPCVIVEC (332 aa)) folds into the PI3K/PI4K catalytic domain. The interval 122-128 (ISQGSSG) is G-loop. ATP is bound by residues Ser129 and Lys144. Residues 149-151 (EPY) are important for substrate binding. The tract at residues 157 to 170 (KWTKYVHKVCCPCC) is important for interaction with membranes. ATP is bound by residues 253-256 (QLFV) and 267-268 (RR). Residues 260–268 (KEAEYWLRR) form an important for interaction with membranes region. The tract at residues 297-305 (RNTDRGNDN) is catalytic loop. The interval 338-358 (AIDNGLAFPFKHPDEWRAYPF) is activation loop. Residue Asp340 participates in ATP binding. The interval 353–362 (WRAYPFHWAW) is important for interaction with membranes.

It belongs to the PI3/PI4-kinase family. Type II PI4K subfamily.

It is found in the cytoplasm. The protein localises to the cytosol. It localises to the golgi apparatus membrane. Its subcellular location is the endoplasmic reticulum membrane. The protein resides in the cell membrane. It is found in the early endosome membrane. The enzyme catalyses a 1,2-diacyl-sn-glycero-3-phospho-(1D-myo-inositol) + ATP = a 1,2-diacyl-sn-glycero-3-phospho-(1D-myo-inositol 4-phosphate) + ADP + H(+). Together with PI4K2A and the type III PI4Ks (PIK4CA and PIK4CB) it contributes to the overall PI4-kinase activity of the cell. This contribution may be especially significant in plasma membrane, endosomal and Golgi compartments. The phosphorylation of phosphatidylinositol (PI) to PI4P is the first committed step in the generation of phosphatidylinositol 4,5-bisphosphate (PIP2), a precursor of the second messenger inositol 1,4,5-trisphosphate (InsP3). Contributes to the production of InsP3 in stimulated cells and is likely to be involved in the regulation of vesicular trafficking. The sequence is that of Phosphatidylinositol 4-kinase type 2-beta (Pi4k2b) from Rattus norvegicus (Rat).